The sequence spans 286 residues: ATP synthase gamma chain (286 aa).

This sequence belongs to the ATPase gamma chain family. In terms of assembly, F-type ATPases have 2 components, CF(1) - the catalytic core - and CF(0) - the membrane proton channel. CF(1) has five subunits: alpha(3), beta(3), gamma(1), delta(1), epsilon(1). CF(0) has three main subunits: a, b and c.

It is found in the cell inner membrane. In terms of biological role, produces ATP from ADP in the presence of a proton gradient across the membrane. The gamma chain is believed to be important in regulating ATPase activity and the flow of protons through the CF(0) complex. This Shewanella piezotolerans (strain WP3 / JCM 13877) protein is ATP synthase gamma chain.